A 211-amino-acid chain; its full sequence is Uridine kinase (211 aa).

12-19 lines the ATP pocket; it reads GGSGSGKT.

Belongs to the uridine kinase family.

The protein resides in the cytoplasm. The enzyme catalyses uridine + ATP = UMP + ADP + H(+). The catalysed reaction is cytidine + ATP = CMP + ADP + H(+). It participates in pyrimidine metabolism; CTP biosynthesis via salvage pathway; CTP from cytidine: step 1/3. It functions in the pathway pyrimidine metabolism; UMP biosynthesis via salvage pathway; UMP from uridine: step 1/1. The sequence is that of Uridine kinase from Bacillus velezensis (strain DSM 23117 / BGSC 10A6 / LMG 26770 / FZB42) (Bacillus amyloliquefaciens subsp. plantarum).